The sequence spans 117 residues: Fluoride-specific ion channel FluC 2 (117 aa).

Helical transmembrane passes span M1 to I21 and F46 to V66. G71 and T74 together coordinate Na(+). The helical transmembrane segment at L95 to Y115 threads the bilayer.

Belongs to the fluoride channel Fluc/FEX (TC 1.A.43) family.

The protein localises to the cell membrane. The catalysed reaction is fluoride(in) = fluoride(out). Its activity is regulated as follows. Na(+) is not transported, but it plays an essential structural role and its presence is essential for fluoride channel function. Fluoride-specific ion channel. Important for reducing fluoride concentration in the cell, thus reducing its toxicity. The protein is Fluoride-specific ion channel FluC 2 of Staphylococcus aureus (strain MRSA252).